A 1315-amino-acid polypeptide reads, in one-letter code: Probable nucleoporin C890.06 (1315 aa).

This sequence belongs to the non-repetitive/WGA-negative nucleoporin family.

Its subcellular location is the cytoplasm. The protein localises to the nucleus. This Schizosaccharomyces pombe (strain 972 / ATCC 24843) (Fission yeast) protein is Probable nucleoporin C890.06.